The primary structure comprises 696 residues: Putative zinc metalloproteinase YIL108W (696 aa).

A Glycyl lysine isopeptide (Lys-Gly) (interchain with G-Cter in ubiquitin) cross-link involves residue K245. H318 is a binding site for Zn(2+). E319 is an active-site residue. Zn(2+) contacts are provided by H322 and H328. A Phosphoserine modification is found at S361. Glycyl lysine isopeptide (Lys-Gly) (interchain with G-Cter in ubiquitin) cross-links involve residues K478, K518, K579, K590, and K596. Positions 522–695 constitute a Jacalin-type lectin domain; the sequence is GIKSPLYGRS…VDAFGIIYGA (174 aa).

The protein belongs to the peptidase M10B family. Zn(2+) is required as a cofactor.

The protein localises to the cytoplasm. The protein is Putative zinc metalloproteinase YIL108W of Saccharomyces cerevisiae (strain ATCC 204508 / S288c) (Baker's yeast).